Consider the following 386-residue polypeptide: Probable family 17 glucosidase SCW4 (386 aa).

The N-terminal stretch at Met1–Ala19 is a signal peptide. Residues Ala20–Arg30 constitute a propeptide that is removed on maturation. A disordered region spans residues Glu88–Ser127. N-linked (GlcNAc...) asparagine glycosylation is present at Asn89. The Nucleophile role is filled by Glu323.

This sequence belongs to the glycosyl hydrolase 17 family. In terms of processing, N-glycosylated.

It localises to the secreted. It is found in the cell wall. Glucanases possibly play a role in cell expansion during growth, in cell-cell fusion during mating, and in spore release during sporulation. The chain is Probable family 17 glucosidase SCW4 (SCW4) from Saccharomyces cerevisiae (strain ATCC 204508 / S288c) (Baker's yeast).